Consider the following 599-residue polypeptide: ATP-dependent zinc metalloprotease FtsH 3 (599 aa).

Topologically, residues 1-7 are cytoplasmic; that stretch reads MKYKKKN. Residues 8 to 28 form a helical membrane-spanning segment; the sequence is ILFITTIIVIYLAFLFNWLEI. The Extracellular portion of the chain corresponds to 29–128; the sequence is GIFKPKGESI…PFSWLLSIFS (100 aa). A helical transmembrane segment spans residues 129–149; that stretch reads ILLNFINVLSSLVFTIYIFLA. At 150–599 the chain is on the cytoplasmic side; sequence IHRESGKLNS…IEQLVVNTKK (450 aa). Residue 214–221 coordinates ATP; it reads GPPGTGKT. H436 is a binding site for Zn(2+). E437 is a catalytic residue. H440 and D512 together coordinate Zn(2+).

In the central section; belongs to the AAA ATPase family. This sequence in the C-terminal section; belongs to the peptidase M41 family. Homohexamer. Zn(2+) serves as cofactor.

The protein resides in the cell membrane. In terms of biological role, acts as a processive, ATP-dependent zinc metallopeptidase for both cytoplasmic and membrane proteins. Plays a role in the quality control of integral membrane proteins. The protein is ATP-dependent zinc metalloprotease FtsH 3 of Phytoplasma mali (strain AT).